The sequence spans 151 residues: Protein SprT-like (151 aa).

Residues 7–146 (QSLTESIAIK…CGRCGGILKL (140 aa)) form the SprT-like domain. H67 contributes to the Zn(2+) binding site. E68 is an active-site residue. A Zn(2+)-binding site is contributed by H71.

It belongs to the SprT family. The cofactor is Zn(2+).

The protein resides in the cytoplasm. The chain is Protein SprT-like from Staphylococcus epidermidis (strain ATCC 35984 / DSM 28319 / BCRC 17069 / CCUG 31568 / BM 3577 / RP62A).